The primary structure comprises 44 residues: uncharacterized protein (44 aa).

The helical transmembrane segment at 19–39 (AVGFVVSFGFFAFLFVMATVI) threads the bilayer.

The protein localises to the cell membrane. This is an uncharacterized protein from Bacillus subtilis (strain 168).